We begin with the raw amino-acid sequence, 98 residues long: Transcription elongation factor A protein-like 7 (98 aa).

Over residues 1-24 (MQRSCNEKEGKPKCSEPKREEEHP) the composition is skewed to basic and acidic residues. The tract at residues 1-31 (MQRSCNEKEGKPKCSEPKREEEHPYGAFEGQ) is disordered. Residues 59 to 89 (GEEMTGEEEEMERCLEEIRSLRKKFRALHSN) are a coiled coil.

This sequence belongs to the TFS-II family. TFA subfamily.

The protein resides in the nucleus. Functionally, plays a role in the negative regulation of NF-kappa-B signaling at the basal level by modulating transcriptional activity of NF-kappa-B on its target gene promoters. Associates with cyclin D1 promoter containing Myc E-box sequence and transcriptionally represses cyclin D1 expression. Regulates telomerase reverse transcriptase expression and telomerase activity in both ALT (alternative lengthening of telomeres)and telomerase-positive cell lines. This chain is Transcription elongation factor A protein-like 7 (Tceal7), found in Rattus norvegicus (Rat).